A 392-amino-acid polypeptide reads, in one-letter code: Phosphoglycerate kinase (392 aa).

Substrate-binding positions include 21 to 23, Arg-36, 59 to 62, Arg-118, and Arg-151; these read DFN and HLGR. Residues Lys-202, Glu-321, and 347-350 contribute to the ATP site; that span reads GGDS.

The protein belongs to the phosphoglycerate kinase family. As to quaternary structure, monomer.

The protein resides in the cytoplasm. The catalysed reaction is (2R)-3-phosphoglycerate + ATP = (2R)-3-phospho-glyceroyl phosphate + ADP. Its pathway is carbohydrate degradation; glycolysis; pyruvate from D-glyceraldehyde 3-phosphate: step 2/5. The sequence is that of Phosphoglycerate kinase from Symbiobacterium thermophilum (strain DSM 24528 / JCM 14929 / IAM 14863 / T).